We begin with the raw amino-acid sequence, 211 residues long: Small ribosomal subunit protein uS3 (211 aa).

One can recognise a KH type-2 domain in the interval 16-85 (IDEYFKTKLV…NPQIEVKQVE (70 aa)).

The protein belongs to the universal ribosomal protein uS3 family. Part of the 30S ribosomal subunit.

In terms of biological role, binds the lower part of the 30S subunit head. This Methanococcus maripaludis (strain C7 / ATCC BAA-1331) protein is Small ribosomal subunit protein uS3.